A 133-amino-acid polypeptide reads, in one-letter code: MARVKRGVTSHAKHKKVLKAAKGFYGRRKNTIRIAKQAVEKSLQYAYRDRKNRKRSFRALWIQRINAATHEHGLTYGRFIDGLNKAGIEIDRKILSDMAIHEPQAFAALVAKAKVALEYLKNTTPNAFESAVA.

The protein belongs to the bacterial ribosomal protein bL20 family.

Its function is as follows. Binds directly to 23S ribosomal RNA and is necessary for the in vitro assembly process of the 50S ribosomal subunit. It is not involved in the protein synthesizing functions of that subunit. The protein is Large ribosomal subunit protein bL20 of Mesorhizobium japonicum (strain LMG 29417 / CECT 9101 / MAFF 303099) (Mesorhizobium loti (strain MAFF 303099)).